Reading from the N-terminus, the 207-residue chain is MAKFDVVDLDLKKVSEIELSDDVFGTEPNAHLFYEVAKMQQINRRRGTVGVKNTSLVSGGGKKPWKQKGTGRARQGSIRASHWVGGGKAMAPKARDYFYRPPRKVRRGALKSALSLRAQEKTLIILDGFSLDAPKSKQAFEVLTKRLKLQNALVIDDKGNTNLHRSVRNLAKFDVLPPEGLNLEAVLRHSHLVLTSAAAKTLEGALS.

The segment at Lys-52–Gly-76 is disordered.

This sequence belongs to the universal ribosomal protein uL4 family. Part of the 50S ribosomal subunit.

Functionally, one of the primary rRNA binding proteins, this protein initially binds near the 5'-end of the 23S rRNA. It is important during the early stages of 50S assembly. It makes multiple contacts with different domains of the 23S rRNA in the assembled 50S subunit and ribosome. In terms of biological role, forms part of the polypeptide exit tunnel. The sequence is that of Large ribosomal subunit protein uL4 from Myxococcus xanthus (strain DK1622).